We begin with the raw amino-acid sequence, 116 residues long: MVIVTNTSKITKGNGEKLIERFNKVGKVEFMEGFLGLEVLLTENTKDFDEVTVVTRWNTKDDFKNWTKSSAFRDAHSKREVPEYILENKISFYEVKVVRGPLTAAEAGNDSQAQAQ.

An ABM domain is found at 2 to 92 (VIVTNTSKIT…EYILENKISF (91 aa)). Residue Asn6 participates in Fe cation binding. His76 contributes to the heme binding site.

Belongs to the antibiotic biosynthesis monooxygenase family. Heme-degrading monooxygenase IsdG subfamily. As to quaternary structure, homodimer.

It localises to the cytoplasm. The catalysed reaction is heme b + 3 reduced [NADPH--hemoprotein reductase] + 3 O2 = biliverdin IXalpha + CO + Fe(2+) + 3 oxidized [NADPH--hemoprotein reductase] + 3 H2O + H(+). In terms of biological role, allows bacterial pathogens to use the host heme as an iron source. Catalyzes the oxidative degradation of the heme macrocyclic porphyrin ring to the biliverdin in the presence of a suitable electron donor such as ascorbate or NADPH--cytochrome P450 reductase, with subsequent release of free iron. This is Heme-degrading monooxygenase from Halalkalibacterium halodurans (strain ATCC BAA-125 / DSM 18197 / FERM 7344 / JCM 9153 / C-125) (Bacillus halodurans).